Here is an 852-residue protein sequence, read N- to C-terminus: MLGPAVLGLSLWALLHPGTGAPLCLSQQLRMKGDYVLGGLFPLGEAEEAGLRSRTRPSSPVCTRFSSNGLLWALAMKMAVEEINNKSDLLPGLRLGYDLFDTCSEPVVAMKPSLMFLAKAGSRDIAAYCNYTQYQPRVLAVIGPHSSELAMVTGKFFSFFLMPQVSYGASMELLSARETFPSFFRTVPSDRVQLTAAAELLQEFGWNWVAALGSDDEYGRQGLSIFSALAAARGICIAHEGLVPLPRADDSRLGKVQDVLHQVNQSSVQVVLLFASVHAAHALFNYSISSRLSPKVWVASEAWLTSDLVMGLPGMAQMGTVLGFLQRGAQLHEFPQYVKTHLALATDPAFCSALGEREQGLEEDVVGQRCPQCDCITLQNVSAGLNHHQTFSVYAAVYSVAQALHNTLQCNASGCPAQDPVKPWQLLENMYNLTFHVGGLPLRFDSSGNVDMEYDLKLWVWQGSVPRLHDVGRFNGSLRTERLKIRWHTSDNQKPVSRCSRQCQEGQVRRVKGFHSCCYDCVDCEAGSYRQNPDDIACTFCGQDEWSPERSTRCFRRRSRFLAWGEPAVLLLLLLLSLALGLVLAALGLFVHHRDSPLVQASGGPLACFGLVCLGLVCLSVLLFPGQPSPARCLAQQPLSHLPLTGCLSTLFLQAAEIFVESELPLSWADRLSGCLRGPWAWLVVLLAMLVEVALCTWYLVAFPPEVVTDWHMLPTEALVHCRTRSWVSFGLAHATNATLAFLCFLGTFLVRSQPGCYNRARGLTFAMLAYFITWVSFVPLLANVQVVLRPAVQMGALLLCVLGILAAFHLPRCYLLMRQPGLNTPEFFLGGGPGDAQGQNDGNTGNQGKHE.

Positions 1–20 (MLGPAVLGLSLWALLHPGTG) are cleaved as a signal peptide. Residues 21-570 (APLCLSQQLR…FLAWGEPAVL (550 aa)) are Extracellular-facing. Asparagine 85, asparagine 130, asparagine 264, asparagine 285, asparagine 380, asparagine 411, asparagine 432, and asparagine 475 each carry an N-linked (GlcNAc...) asparagine glycan. The interval 536 to 545 (IACTFCGQDE) is required for brazzein responsiveness. A helical transmembrane segment spans residues 571–591 (LLLLLLSLALGLVLAALGLFV). Over 592–603 (HHRDSPLVQASG) the chain is Cytoplasmic. The chain crosses the membrane as a helical span at residues 604–624 (GPLACFGLVCLGLVCLSVLLF). Over 625–639 (PGQPSPARCLAQQPL) the chain is Extracellular. The helical transmembrane segment at 640–660 (SHLPLTGCLSTLFLQAAEIFV) threads the bilayer. Residues 661–682 (ESELPLSWADRLSGCLRGPWAW) are Cytoplasmic-facing. Residues 683-703 (LVVLLAMLVEVALCTWYLVAF) form a helical membrane-spanning segment. Over 704-729 (PPEVVTDWHMLPTEALVHCRTRSWVS) the chain is Extracellular. The helical transmembrane segment at 730-750 (FGLAHATNATLAFLCFLGTFL) threads the bilayer. Over 751–762 (VRSQPGCYNRAR) the chain is Cytoplasmic. The helical transmembrane segment at 763–783 (GLTFAMLAYFITWVSFVPLLA) threads the bilayer. At 784 to 789 (NVQVVL) the chain is on the extracellular side. Residues 790–810 (RPAVQMGALLLCVLGILAAFH) traverse the membrane as a helical segment. Over 811–852 (LPRCYLLMRQPGLNTPEFFLGGGPGDAQGQNDGNTGNQGKHE) the chain is Cytoplasmic.

The protein belongs to the G-protein coupled receptor 3 family. TAS1R subfamily. In terms of assembly, forms homodimers or heterodimers with TAS1R1 and TAS1R2.

The protein resides in the cell membrane. Functionally, putative taste receptor. TAS1R1/TAS1R3 responds to the umami taste stimulus (the taste of monosodium glutamate). TAS1R2/TAS1R3 recognizes diverse natural and synthetic sweeteners. TAS1R3 is essential for the recognition and response to the disaccharide trehalose. Sequence differences within and between species can significantly influence the selectivity and specificity of taste responses. The protein is Taste receptor type 1 member 3 (TAS1R3) of Homo sapiens (Human).